A 246-amino-acid polypeptide reads, in one-letter code: 3'(2'),5'-bisphosphate nucleotidase CysQ (246 aa).

Positions 64, 83, 85, 86, and 205 each coordinate Mg(2+). Position 64 (glutamate 64) interacts with substrate. Substrate is bound by residues 85–88 (LDGT) and aspartate 205.

The protein belongs to the inositol monophosphatase superfamily. CysQ family. Mg(2+) is required as a cofactor.

The protein localises to the cell inner membrane. The catalysed reaction is adenosine 3',5'-bisphosphate + H2O = AMP + phosphate. Its activity is regulated as follows. Inhibited by lithium and calcium. In terms of biological role, converts adenosine-3',5'-bisphosphate (PAP) to AMP. May also convert adenosine 3'-phosphate 5'-phosphosulfate (PAPS) to adenosine 5'-phosphosulfate (APS). Has 10000-fold lower activity towards inositol 1,4-bisphosphate (Ins(1,4)P2). The chain is 3'(2'),5'-bisphosphate nucleotidase CysQ from Escherichia coli (strain K12).